We begin with the raw amino-acid sequence, 341 residues long: MKNYLIEIKKLSKNFLHSSSQHSTYALKDIDLAIPAGCIYGIIGMSGAGKSTLLRCINGLEAPSKGDILIEGKSLFQKNPAALRAIRQKMGMVFQHFQLFSSRTVAENIAYPMEIGFISQVFQEERINQLLNLVGLEQKKEIYPTSLSGGEKQRVGIARALANHPHILLCDEPTSALDPKTTRSILQLLAELNQKFGLTIIIITHQLETVKQICHRVAVLSEGEIVEEGEVKQVFIRPQHQATRHLLHLDGDQIPVDLIQQRNPDKLLVRLGFEGNQAKEPIISQLIKQFDIEVNILSGGLDYLQKTIVGNLFVEISGLPQNIQKAQAFLKSKQIICEIIL.

The 242-residue stretch at 6–247 (IEIKKLSKNF…PQHQATRHLL (242 aa)) folds into the ABC transporter domain. 44–51 (GMSGAGKS) contributes to the ATP binding site.

Belongs to the ABC transporter superfamily. Methionine importer (TC 3.A.1.24) family. The complex is composed of two ATP-binding proteins (MetN), two transmembrane proteins (MetI) and a solute-binding protein (MetQ).

It is found in the cell inner membrane. The catalysed reaction is L-methionine(out) + ATP + H2O = L-methionine(in) + ADP + phosphate + H(+). The enzyme catalyses D-methionine(out) + ATP + H2O = D-methionine(in) + ADP + phosphate + H(+). Functionally, part of the ABC transporter complex MetNIQ involved in methionine import. Responsible for energy coupling to the transport system. The chain is Methionine import ATP-binding protein MetN from Protochlamydia amoebophila (strain UWE25).